The following is a 241-amino-acid chain: Deoxyribose-phosphate aldolase (241 aa).

D95 (proton donor/acceptor) is an active-site residue. The Schiff-base intermediate with acetaldehyde role is filled by K159. The active-site Proton donor/acceptor is the K188.

Belongs to the DeoC/FbaB aldolase family. DeoC type 1 subfamily.

The protein localises to the cytoplasm. The catalysed reaction is 2-deoxy-D-ribose 5-phosphate = D-glyceraldehyde 3-phosphate + acetaldehyde. It functions in the pathway carbohydrate degradation; 2-deoxy-D-ribose 1-phosphate degradation; D-glyceraldehyde 3-phosphate and acetaldehyde from 2-deoxy-alpha-D-ribose 1-phosphate: step 2/2. In terms of biological role, catalyzes a reversible aldol reaction between acetaldehyde and D-glyceraldehyde 3-phosphate to generate 2-deoxy-D-ribose 5-phosphate. In Rhodopirellula baltica (strain DSM 10527 / NCIMB 13988 / SH1), this protein is Deoxyribose-phosphate aldolase.